The primary structure comprises 332 residues: Ketol-acid reductoisomerase (NADP(+)) (332 aa).

Residues Met1–Thr182 enclose the KARI N-terminal Rossmann domain. NADP(+)-binding positions include Tyr25–Gln28, Lys49, Ser51, and Asp83–Gln86. Residue His108 is part of the active site. Gly134 contacts NADP(+). The KARI C-terminal knotted domain maps to Thr183–Leu328. 4 residues coordinate Mg(2+): Asp191, Glu195, Glu227, and Glu231. Ser252 serves as a coordination point for substrate.

The protein belongs to the ketol-acid reductoisomerase family. Requires Mg(2+) as cofactor.

It carries out the reaction (2R)-2,3-dihydroxy-3-methylbutanoate + NADP(+) = (2S)-2-acetolactate + NADPH + H(+). It catalyses the reaction (2R,3R)-2,3-dihydroxy-3-methylpentanoate + NADP(+) = (S)-2-ethyl-2-hydroxy-3-oxobutanoate + NADPH + H(+). Its pathway is amino-acid biosynthesis; L-isoleucine biosynthesis; L-isoleucine from 2-oxobutanoate: step 2/4. It functions in the pathway amino-acid biosynthesis; L-valine biosynthesis; L-valine from pyruvate: step 2/4. Its function is as follows. Involved in the biosynthesis of branched-chain amino acids (BCAA). Catalyzes an alkyl-migration followed by a ketol-acid reduction of (S)-2-acetolactate (S2AL) to yield (R)-2,3-dihydroxy-isovalerate. In the isomerase reaction, S2AL is rearranged via a Mg-dependent methyl migration to produce 3-hydroxy-3-methyl-2-ketobutyrate (HMKB). In the reductase reaction, this 2-ketoacid undergoes a metal-dependent reduction by NADPH to yield (R)-2,3-dihydroxy-isovalerate. This is Ketol-acid reductoisomerase (NADP(+)) from Methanothrix thermoacetophila (strain DSM 6194 / JCM 14653 / NBRC 101360 / PT) (Methanosaeta thermophila).